A 359-amino-acid chain; its full sequence is N-acetyl-gamma-glutamyl-phosphate reductase (359 aa).

The active site involves cysteine 162.

This sequence belongs to the NAGSA dehydrogenase family. Type 1 subfamily.

The protein localises to the cytoplasm. It catalyses the reaction N-acetyl-L-glutamate 5-semialdehyde + phosphate + NADP(+) = N-acetyl-L-glutamyl 5-phosphate + NADPH + H(+). It participates in amino-acid biosynthesis; L-arginine biosynthesis; N(2)-acetyl-L-ornithine from L-glutamate: step 3/4. Functionally, catalyzes the NADPH-dependent reduction of N-acetyl-5-glutamyl phosphate to yield N-acetyl-L-glutamate 5-semialdehyde. The chain is N-acetyl-gamma-glutamyl-phosphate reductase from Prochlorococcus marinus (strain SARG / CCMP1375 / SS120).